Here is a 325-residue protein sequence, read N- to C-terminus: UPF0285 protein MmarC6_0247 (325 aa).

It belongs to the UPF0285 family.

The polypeptide is UPF0285 protein MmarC6_0247 (Methanococcus maripaludis (strain C6 / ATCC BAA-1332)).